The sequence spans 547 residues: Beta,beta-carotene 15,15'-dioxygenase (547 aa).

Fe cation-binding residues include His172, His237, His308, and His514. Basic and acidic residues predominate over residues Gln528 to Asp540. A disordered region spans residues Gln528–Thr547.

Belongs to the carotenoid oxygenase family. Fe(2+) serves as cofactor. As to expression, highly expressed in retinal pigment epithelium. Also expressed in kidney, testis, liver, brain, small intestine and colon.

The protein resides in the cytoplasm. The protein localises to the cytosol. The catalysed reaction is all-trans-beta-carotene + O2 = 2 all-trans-retinal. It functions in the pathway cofactor metabolism; retinol metabolism. Symmetrically cleaves beta-carotene into two molecules of retinal using a dioxygenase mechanism. This chain is Beta,beta-carotene 15,15'-dioxygenase, found in Homo sapiens (Human).